Consider the following 67-residue polypeptide: (2R)-sulfolactate sulfo-lyase subunit alpha (67 aa).

In terms of assembly, (2R)-sulfolactate sulfo-lyase is composed of a SuyA and a SuyB subunit.

The protein localises to the cytoplasm. It carries out the reaction (2R)-3-sulfolactate = sulfite + pyruvate + H(+). Functionally, together with SuyB, desulfonates sulfolactate to pyruvate and sulfite. This chain is (2R)-sulfolactate sulfo-lyase subunit alpha (suyA), found in Paracoccus pantotrophus (Thiosphaera pantotropha).